A 275-amino-acid polypeptide reads, in one-letter code: Elongation factor Ts (275 aa).

Positions 76-79 (TDFV) are involved in Mg(2+) ion dislocation from EF-Tu.

It belongs to the EF-Ts family.

It is found in the cytoplasm. Its function is as follows. Associates with the EF-Tu.GDP complex and induces the exchange of GDP to GTP. It remains bound to the aminoacyl-tRNA.EF-Tu.GTP complex up to the GTP hydrolysis stage on the ribosome. The polypeptide is Elongation factor Ts (Corynebacterium diphtheriae (strain ATCC 700971 / NCTC 13129 / Biotype gravis)).